Reading from the N-terminus, the 542-residue chain is MARYVFITGGVVSSLGKGIAAAALAALLQARGYRVRIRKLDPYLNVDPGTMSPYQHGEVFVTDDGAETDLDLGHYERFTGRPANQQDNITTGRIYRNIIEKERRGDYLGATVQVIPHVTDEIKNFVLEGNEDYDFVLCEIGGTVGDIEAMPFLEAIRQLGNELPRGTAVYIHLTLMPYIPAAGELKTKPTQHSVKELRSIGIAPDILLVRADREIPESERRKLSLFCNVRESAVIQALDVATIYDVPIAYHKEGLDSEVLSAFGIDPAPKPRMDRWEEVSHRLHNPEGEVTIAVVGKYTGLKDAYKSLIEALHHGGLANKVKVNLDWIEAEVFESEDPAPYLEKVHGILVPGGFGERGAEGKILAAKFARERKVPYFGICFGMQMACIEAARNLVGIEDASSSEFDPTREPVVGLMTEWLKGNMLEKRAAAGDLGGTMRLGAYEAVLKPDSKIAQIYGSTDIHERHRHRYEVNIDYKDRLEAAGLNFAGMSPDGVLPETVEYADHPWFIGVQYHPELKSRPFEPHPLFASFIEAAIEQSRLV.

The interval 1-265 is amidoligase domain; it reads MARYVFITGG…DSEVLSAFGI (265 aa). Residue S13 coordinates CTP. Position 13 (S13) interacts with UTP. 14–19 contributes to the ATP binding site; that stretch reads SLGKGI. Y54 lines the L-glutamine pocket. ATP is bound at residue D71. Residues D71 and E139 each coordinate Mg(2+). CTP is bound by residues 146–148, 186–191, and K222; these read DIE and KTKPTQ. UTP is bound by residues 186 to 191 and K222; that span reads KTKPTQ. The Glutamine amidotransferase type-1 domain occupies 291–541; that stretch reads TIAVVGKYTG…IEAAIEQSRL (251 aa). Residue G353 participates in L-glutamine binding. The active-site Nucleophile; for glutamine hydrolysis is C380. L-glutamine-binding positions include 381–384, E404, and R469; that span reads FGMQ. Active-site residues include H514 and E516.

The protein belongs to the CTP synthase family. Homotetramer.

It carries out the reaction UTP + L-glutamine + ATP + H2O = CTP + L-glutamate + ADP + phosphate + 2 H(+). The catalysed reaction is L-glutamine + H2O = L-glutamate + NH4(+). It catalyses the reaction UTP + NH4(+) + ATP = CTP + ADP + phosphate + 2 H(+). It participates in pyrimidine metabolism; CTP biosynthesis via de novo pathway; CTP from UDP: step 2/2. With respect to regulation, allosterically activated by GTP, when glutamine is the substrate; GTP has no effect on the reaction when ammonia is the substrate. The allosteric effector GTP functions by stabilizing the protein conformation that binds the tetrahedral intermediate(s) formed during glutamine hydrolysis. Inhibited by the product CTP, via allosteric rather than competitive inhibition. Functionally, catalyzes the ATP-dependent amination of UTP to CTP with either L-glutamine or ammonia as the source of nitrogen. Regulates intracellular CTP levels through interactions with the four ribonucleotide triphosphates. The sequence is that of CTP synthase from Brucella melitensis biotype 1 (strain ATCC 23456 / CCUG 17765 / NCTC 10094 / 16M).